Consider the following 336-residue polypeptide: MNTEATHDKTEALSTGVRLRNAREQLGLSQQAVAERLCLKVSTVRDIEEDKAPADLASTFLRGYIRSYAKLVHIPEEELLPMMEKHAPVRAAKVAPMQTFSLGKRRKKRDGWLMSFTWLVLFVVIGLTGAWWWQNHKAQQEEITTMADQSSAALNNSGNNGAQSVPLNTDSASTSSEPQTAETDSQTVEPVQTPAPAMTPDQTAAQNAVVSPSQANVDSAPAVTPTTTGNVNVTQPLPTDQAGVAATTADANALVMNFSADCWLEVTDATGKKLFSGLQRKDGTLNLTGQAPYKLKIGAPSAVQIQYQGKPVDLSRFIRTNQVARLTVSAEQSAAQ.

Topologically, residues 1–111 (MNTEATHDKT…LGKRRKKRDG (111 aa)) are cytoplasmic. In terms of domain architecture, HTH cro/C1-type spans 19–71 (LRNAREQLGLSQQAVAERLCLKVSTVRDIEEDKAPADLASTFLRGYIRSYAKL). A DNA-binding region (H-T-H motif) is located at residues 30–49 (QQAVAERLCLKVSTVRDIEE). Residues 112–132 (WLMSFTWLVLFVVIGLTGAWW) traverse the membrane as a helical; Signal-anchor for type II membrane protein segment. Topologically, residues 133-336 (WQNHKAQQEE…TVSAEQSAAQ (204 aa)) are periplasmic. A compositionally biased stretch (low complexity) spans 152-164 (AALNNSGNNGAQS). Positions 152–235 (AALNNSGNNG…TTTGNVNVTQ (84 aa)) are disordered. Composition is skewed to polar residues over residues 165–190 (VPLN…TVEP) and 200–217 (PDQT…QANV). Residues 220-235 (APAVTPTTTGNVNVTQ) show a composition bias toward low complexity.

The protein belongs to the RodZ family.

Its subcellular location is the cell inner membrane. In terms of biological role, cytoskeletal protein that is involved in cell-shape control through regulation of the length of the long axis. This chain is Cytoskeleton protein RodZ, found in Enterobacter sp. (strain 638).